Here is a 335-residue protein sequence, read N- to C-terminus: Aspartate carbamoyltransferase catalytic subunit (335 aa).

Arg54 and Thr55 together coordinate carbamoyl phosphate. Residue Lys82 participates in L-aspartate binding. 3 residues coordinate carbamoyl phosphate: Arg104, His134, and Gln137. The L-aspartate site is built by Arg177 and Arg232. Carbamoyl phosphate-binding residues include Gly277 and Pro278.

This sequence belongs to the aspartate/ornithine carbamoyltransferase superfamily. ATCase family. In terms of assembly, heterododecamer (2C3:3R2) of six catalytic PyrB chains organized as two trimers (C3), and six regulatory PyrI chains organized as three dimers (R2).

The enzyme catalyses carbamoyl phosphate + L-aspartate = N-carbamoyl-L-aspartate + phosphate + H(+). The protein operates within pyrimidine metabolism; UMP biosynthesis via de novo pathway; (S)-dihydroorotate from bicarbonate: step 2/3. In terms of biological role, catalyzes the condensation of carbamoyl phosphate and aspartate to form carbamoyl aspartate and inorganic phosphate, the committed step in the de novo pyrimidine nucleotide biosynthesis pathway. This Paenarthrobacter aurescens (strain TC1) protein is Aspartate carbamoyltransferase catalytic subunit.